Consider the following 543-residue polypeptide: Malate synthase (543 aa).

The protein belongs to the malate synthase family. In terms of assembly, homodimer.

The protein localises to the cytoplasm. The enzyme catalyses glyoxylate + acetyl-CoA + H2O = (S)-malate + CoA + H(+). The protein operates within carbohydrate metabolism; glyoxylate cycle; (S)-malate from isocitrate: step 2/2. In Streptomyces arenae, this protein is Malate synthase (aceB).